The primary structure comprises 387 residues: Probable serine protease FE772_23060 (387 aa).

It belongs to the peptidase S1 family.

Its function is as follows. Possibly a dedicated protease for substrate gasdermin bGSDM; cleaves the bGSDM precursor, releasing the pore-forming moiety, which integrates into the membrane and triggers cell death. Involved in defense against bacteriophages. When this probable 4 gene operon (bGSDM-FE772_23060-FE772_23065-FE772_23070) is inserted into E.coli it provides nearly 100-fold protection against phages T5 and T6 and about 8-fold against phage T4. The operon without bGSDM no longer protects against phage. The polypeptide is Probable serine protease FE772_23060 (Lysobacter enzymogenes).